We begin with the raw amino-acid sequence, 152 residues long: MPVKCCFYRSPTAETMTWSENMDTLLANQAGLDAFRIFLKSEFSEENVEFWLACEDFKKTKNADKIASKAKMIYSEFIEADAPKEINIDFGTRDLISKNIAEPTLKCFDEAQKLIYCLMAKDSFPRFLKSEIYKKLVNSQQVPNHKKWLPFL.

An RGS domain is found at 21 to 137 (NMDTLLANQA…LKSEIYKKLV (117 aa)).

As to expression, expressed ubiquitously.

Its function is as follows. Inhibits signal transduction by increasing the GTPase activity of G protein alpha subunits thereby driving them into their inactive GDP-bound form. This is Regulator of G-protein signaling 21 (RGS21) from Homo sapiens (Human).